A 196-amino-acid polypeptide reads, in one-letter code: ATP-dependent Clp protease proteolytic subunit (196 aa).

The active-site Nucleophile is S101. H126 is a catalytic residue.

This sequence belongs to the peptidase S14 family. In terms of assembly, component of the chloroplastic Clp protease core complex.

The protein resides in the plastid. It localises to the chloroplast stroma. The catalysed reaction is Hydrolysis of proteins to small peptides in the presence of ATP and magnesium. alpha-casein is the usual test substrate. In the absence of ATP, only oligopeptides shorter than five residues are hydrolyzed (such as succinyl-Leu-Tyr-|-NHMec, and Leu-Tyr-Leu-|-Tyr-Trp, in which cleavage of the -Tyr-|-Leu- and -Tyr-|-Trp bonds also occurs).. Cleaves peptides in various proteins in a process that requires ATP hydrolysis. Has a chymotrypsin-like activity. Plays a major role in the degradation of misfolded proteins. The sequence is that of ATP-dependent Clp protease proteolytic subunit from Spinacia oleracea (Spinach).